A 358-amino-acid polypeptide reads, in one-letter code: Peptide chain release factor 1 (358 aa).

An N5-methylglutamine modification is found at Gln-233.

Belongs to the prokaryotic/mitochondrial release factor family. In terms of processing, methylated by PrmC. Methylation increases the termination efficiency of RF1.

It is found in the cytoplasm. In terms of biological role, peptide chain release factor 1 directs the termination of translation in response to the peptide chain termination codons UAG and UAA. In Listeria monocytogenes serovar 1/2a (strain ATCC BAA-679 / EGD-e), this protein is Peptide chain release factor 1.